The sequence spans 81 residues: Translational regulator CsrA (81 aa).

It belongs to the CsrA/RsmA family. Homodimer; the beta-strands of each monomer intercalate to form a hydrophobic core, while the alpha-helices form wings that extend away from the core.

The protein localises to the cytoplasm. Its function is as follows. A translational regulator that binds mRNA to regulate translation initiation and/or mRNA stability. Usually binds in the 5'-UTR at or near the Shine-Dalgarno sequence preventing ribosome-binding, thus repressing translation. Its main target seems to be the major flagellin gene, while its function is anatagonized by FliW. In Desulforapulum autotrophicum (strain ATCC 43914 / DSM 3382 / VKM B-1955 / HRM2) (Desulfobacterium autotrophicum), this protein is Translational regulator CsrA.